Here is a 196-residue protein sequence, read N- to C-terminus: ATP-dependent Clp protease proteolytic subunit (196 aa).

Residue Ser96 is the Nucleophile of the active site. His121 is a catalytic residue.

This sequence belongs to the peptidase S14 family. As to quaternary structure, fourteen ClpP subunits assemble into 2 heptameric rings which stack back to back to give a disk-like structure with a central cavity, resembling the structure of eukaryotic proteasomes.

The protein localises to the cytoplasm. It catalyses the reaction Hydrolysis of proteins to small peptides in the presence of ATP and magnesium. alpha-casein is the usual test substrate. In the absence of ATP, only oligopeptides shorter than five residues are hydrolyzed (such as succinyl-Leu-Tyr-|-NHMec, and Leu-Tyr-Leu-|-Tyr-Trp, in which cleavage of the -Tyr-|-Leu- and -Tyr-|-Trp bonds also occurs).. Cleaves peptides in various proteins in a process that requires ATP hydrolysis. Has a chymotrypsin-like activity. Plays a major role in the degradation of misfolded proteins. The chain is ATP-dependent Clp protease proteolytic subunit from Streptococcus gordonii (strain Challis / ATCC 35105 / BCRC 15272 / CH1 / DL1 / V288).